We begin with the raw amino-acid sequence, 96 residues long: Muconolactone Delta-isomerase (96 aa).

The protein belongs to the muconolactone Delta-isomerase family. As to quaternary structure, homodecamer.

The enzyme catalyses (S)-muconolactone = (4,5-dihydro-5-oxofuran-2-yl)-acetate. Its pathway is aromatic compound metabolism; beta-ketoadipate pathway; 5-oxo-4,5-dihydro-2-furylacetate from catechol: step 3/3. The polypeptide is Muconolactone Delta-isomerase (catC) (Pseudomonas putida (Arthrobacter siderocapsulatus)).